The sequence spans 293 residues: Elongation factor Ts (293 aa).

The segment at Thr79 to Val82 is involved in Mg(2+) ion dislocation from EF-Tu.

This sequence belongs to the EF-Ts family.

Its subcellular location is the cytoplasm. Associates with the EF-Tu.GDP complex and induces the exchange of GDP to GTP. It remains bound to the aminoacyl-tRNA.EF-Tu.GTP complex up to the GTP hydrolysis stage on the ribosome. The sequence is that of Elongation factor Ts from Exiguobacterium sibiricum (strain DSM 17290 / CCUG 55495 / CIP 109462 / JCM 13490 / 255-15).